We begin with the raw amino-acid sequence, 611 residues long: Homeobox protein BEL1 homolog (611 aa).

Disordered regions lie at residues 63 to 87 (QIRM…DQNQ), 101 to 133 (VNND…NPTS), 141 to 160 (LRPQ…TQHQ), and 174 to 195 (SHHQ…FQIG). Residues 118–133 (PSQGLSLSLSSSNPTS) show a composition bias toward low complexity. Residues 174 to 183 (SHHQNNNNNN) show a composition bias toward low complexity. The SR/KY domain stretch occupies residues 197 to 213 (SKYLSPAQELLSEFCSL). Positions 225–263 (MKHKKKQKGKQQEEWDTSHHSNNDQHDQSATTSSKKHVP) are disordered. The span at 234 to 251 (KQQEEWDTSHHSNNDQHD) shows a compositional bias: basic and acidic residues. Residues 269–340 (EFMELQKRKA…CLKDGLVGQI (72 aa)) form a BELL domain region. A Bipartite nuclear localization motif is present at residues 275-290 (KRKAKLLSMLEELKRR). Residues 391–453 (PWRPQRGLPE…NARVRLWKPM (63 aa)) constitute a DNA-binding region (homeobox).

It belongs to the TALE/BELL homeobox family. As to quaternary structure, may form heterodimeric complexes with TALE/KNOX proteins STM, KNAT1/BP, KNAT2 and KNAT5. Interacts with AG-SEP1 and AG-SEP3 dimers. Interacts with KNATM, isoform KNATM-B. Interacts with BZIP30. Expressed in both floral and vegetative tissues.

The protein localises to the nucleus. Plays a major role in ovule patterning and in determination of integument identity via its interaction with MADS-box factors. Formation of complex with AG-SEP dimers negatively regulates the carpel identity process and favors the maintenance of ovule identity. BEL1-STM complex maintains the indeterminacy of the inflorescence meristem. Required, with SPL, for cytokinin-induced PIN1 expression in ovules. This Arabidopsis thaliana (Mouse-ear cress) protein is Homeobox protein BEL1 homolog (BEL1).